Reading from the N-terminus, the 463-residue chain is Retinoic acid receptor RXR-gamma (463 aa).

Residues 1–138 form a modulating region; that stretch reads MYGNYSHFMK…TSPGSLVKHI (138 aa). The interval 18–53 is disordered; sequence SPGHTGSTSMSPSAALSTGKPMDSHPSYTDTPVSAP. Polar residues predominate over residues 21-33; the sequence is HTGSTSMSPSAAL. 2 NR C4-type zinc fingers span residues 139–159 and 175–194; these read CAIC…CEGC and CRDN…CQYC. Residues 139–204 constitute a DNA-binding region (nuclear receptor); it reads CAICGDRSSG…RYQKCLVMGM (66 aa). Positions 205-230 are hinge; the sequence is KREAVQEERQRSRERAESEAECASSG. Residues 211–222 are compositionally biased toward basic and acidic residues; that stretch reads EERQRSRERAES. A disordered region spans residues 211-232; sequence EERQRSRERAESEAECASSGHE. The NR LBD domain occupies 231–459; the sequence is HEDMPVERIL…TFLMEMLETP (229 aa).

Belongs to the nuclear hormone receptor family. NR2 subfamily. Homodimer. Heterodimer with a RAR molecule. Binds DNA preferentially as a RAR/RXR heterodimer. Interacts with RARA. Acetylated by EP300.

The protein resides in the nucleus. Its subcellular location is the cytoplasm. Functionally, receptor for retinoic acid. Retinoic acid receptors bind as heterodimers to their target response elements in response to their ligands, all-trans or 9-cis retinoic acid, and regulate gene expression in various biological processes. The RAR/RXR heterodimers bind to the retinoic acid response elements (RARE) composed of tandem 5'-AGGTCA-3' sites known as DR1-DR5. The high affinity ligand for RXRs is 9-cis retinoic acid. The chain is Retinoic acid receptor RXR-gamma (RXRG) from Pongo abelii (Sumatran orangutan).